We begin with the raw amino-acid sequence, 375 residues long: Actin (375 aa).

It belongs to the actin family.

It localises to the cytoplasm. The protein resides in the cytoskeleton. It carries out the reaction ATP + H2O = ADP + phosphate + H(+). Actins are highly conserved proteins that are involved in various types of cell motility and are ubiquitously expressed in all eukaryotic cells. The sequence is that of Actin from Giardia intestinalis (Giardia lamblia).